We begin with the raw amino-acid sequence, 141 residues long: Hemoglobin subunit alpha-A (141 aa).

The Globin domain maps to valine 1–arginine 141. Histidine 58 contacts O2. Histidine 87 serves as a coordination point for heme b.

The protein belongs to the globin family. In terms of assembly, heterotetramer of two alpha chains and two beta chains. As to expression, red blood cells.

In terms of biological role, involved in oxygen transport from the lung to the various peripheral tissues. The chain is Hemoglobin subunit alpha-A (HBAA) from Vultur gryphus (Andean condor).